Consider the following 314-residue polypeptide: MKNKKQPVVILVGPTAVGKTKLSIGLAKMLNAEIISGDSMQVYKGMDIGTAKVTEEETEGVPHHLIDILEPSDTFSTADYQKMVRGKITEIADRGKLPMIVGGTGLYIQSVLYDYTFTENSGDPVFRERMEKLAAEEGAEALHAKLAAADPEAAAAIHQNNTRRVIRALEILHVSGKTMSEHLKTQKRELLYNAVLIGLTMDREVLYGRINERVDLMLETGLLDEVKRLYDMNIRDSQSIQAIGYKELYEYLDGKVPLPQAVEQLKQNSRRYAKRQLTWFRNKMPVSWTDMTPPVDIEQKKKEIFECIAGKLEI.

13-20 (GPTAVGKT) serves as a coordination point for ATP. Substrate is bound at residue 15–20 (TAVGKT). The segment at 38–41 (DSMQ) is interaction with substrate tRNA.

This sequence belongs to the IPP transferase family. In terms of assembly, monomer. Mg(2+) serves as cofactor.

The enzyme catalyses adenosine(37) in tRNA + dimethylallyl diphosphate = N(6)-dimethylallyladenosine(37) in tRNA + diphosphate. Its function is as follows. Catalyzes the transfer of a dimethylallyl group onto the adenine at position 37 in tRNAs that read codons beginning with uridine, leading to the formation of N6-(dimethylallyl)adenosine (i(6)A). The polypeptide is tRNA dimethylallyltransferase (Bacillus velezensis (strain DSM 23117 / BGSC 10A6 / LMG 26770 / FZB42) (Bacillus amyloliquefaciens subsp. plantarum)).